Reading from the N-terminus, the 182-residue chain is Nucleoside-triphosphatase THEP1 (182 aa).

ATP-binding positions include 10–17 (GRPGIGKT) and 102–109 (VVVIDEIG).

This sequence belongs to the THEP1 NTPase family.

The catalysed reaction is a ribonucleoside 5'-triphosphate + H2O = a ribonucleoside 5'-diphosphate + phosphate + H(+). Has nucleotide phosphatase activity towards ATP, GTP, CTP, TTP and UTP. May hydrolyze nucleoside diphosphates with lower efficiency. The sequence is that of Nucleoside-triphosphatase THEP1 from Thermofilum pendens (strain DSM 2475 / Hrk 5).